A 275-amino-acid chain; its full sequence is Autophagy protein 5 (275 aa).

The residue at position 1 (methionine 1) is an N-acetylmethionine. Lysine 130 participates in a covalent cross-link: Glycyl lysine isopeptide (Lys-Gly) (interchain with G-Cter in ATG12).

Belongs to the ATG5 family. Forms a conjugate with ATG12. Part of the minor complex composed of 4 sets of ATG12-ATG5 and ATG16L1 (400 kDa); this complex interacts with ATG3 leading to disruption of ATG7 interaction and promotion of ATG8-like proteins lipidation. Forms an 800-kDa complex composed of ATG12-ATG5 and ATG16L2. The ATG12-ATG5 conjugate interacts with RAB33A; this interaction is bridged by ATG16L1 and promotes ATG12-ATG5-ATG16L1 complex recruitment to phagophores. Interacts with TECPR1; the interaction is direct and does not take place when ATG16L1 is associated with the ATG5-ATG12 conjugate. Interacts with DHX58/RIG-1, IFIH1/MDA5 and MAVS/IPS-1 in monomeric form as well as in ATG12-ATG5 conjugate form. The interaction with MAVS is further enhanced upon vesicular stomatitis virus (VSV) infection. Interacts with ATG3. Interacts with ATG7 and ATG10. Interacts with FADD. Interacts with Bassoon/BSN; this interaction is important for the regulation of presynaptic autophagy. Interacts with ATG16L2. In terms of processing, conjugated to ATG12; which is essential for autophagy, but is not required for association with isolation membrane. Post-translationally, acetylated by EP300. Ubiquitous.

It localises to the cytoplasm. Its subcellular location is the preautophagosomal structure membrane. Involved in autophagic vesicle formation. Conjugation with ATG12, through a ubiquitin-like conjugating system involving ATG7 as an E1-like activating enzyme and ATG10 as an E2-like conjugating enzyme, is essential for its function. The ATG12-ATG5 conjugate acts as an E3-like enzyme which is required for lipidation of ATG8 family proteins and their association to the vesicle membranes. Involved in mitochondrial quality control after oxidative damage, and in subsequent cellular longevity. Plays a critical role in multiple aspects of lymphocyte development and is essential for both B and T lymphocyte survival and proliferation. Required for optimal processing and presentation of antigens for MHC II. Involved in the maintenance of axon morphology and membrane structures, as well as in normal adipocyte differentiation. Promotes primary ciliogenesis through removal of OFD1 from centriolar satellites and degradation of IFT20 via the autophagic pathway. As part of the ATG8 conjugation system with ATG12 and ATG16L1, required for recruitment of LRRK2 to stressed lysosomes and induction of LRRK2 kinase activity in response to lysosomal stress. Functionally, may play an important role in the apoptotic process, possibly within the modified cytoskeleton. Its expression is a relatively late event in the apoptotic process, occurring downstream of caspase activity. Plays a crucial role in IFN-gamma-induced autophagic cell death by interacting with FADD. In terms of biological role, (Microbial infection) May act as a proviral factor. In association with ATG12, negatively regulates the innate antiviral immune response by impairing the type I IFN production pathway upon vesicular stomatitis virus (VSV) infection. In Mus musculus (Mouse), this protein is Autophagy protein 5.